The following is a 71-amino-acid chain: Light-harvesting protein B-800/850 alpha chain (71 aa).

Over 1 to 15 (MNQGKVWRVVKPTVG) the chain is Cytoplasmic. A helical transmembrane segment spans residues 16–36 (VPVYLGAVAVTALILHGGLLA). Histidine 31 lines the a bacteriochlorophyll pocket. Residues 37–50 (KTDWFGAYWNGGKK) lie on the Periplasmic side of the membrane. A helical transmembrane segment spans residues 51–71 (AAAAAAAVAPAPVAAPQAPAQ).

The protein belongs to the antenna complex alpha subunit family. As to quaternary structure, an alpha/beta heterodimer conjugated to 3 bacteriochlorophyll molecules. The core complex is formed by different alpha and beta chains, binding bacteriochlorophyll molecules, and arranged most probably in tetrameric structures disposed around the reaction center. The non-pigmented gamma chains may constitute additional components.

It localises to the cell membrane. Antenna complexes are light-harvesting systems, which transfer the excitation energy to the reaction centers. This Rubrivivax gelatinosus (Rhodocyclus gelatinosus) protein is Light-harvesting protein B-800/850 alpha chain (pucA).